The following is a 535-amino-acid chain: CTP synthase (535 aa).

An amidoligase domain region spans residues 1-267 (MTKYIFVTGG…DKLVCDHMKL (267 aa)). Position 13 (serine 13) interacts with CTP. Serine 13 contacts UTP. 14–19 (SLGKGI) lines the ATP pocket. L-glutamine is bound at residue tyrosine 54. Aspartate 71 is an ATP binding site. Residues aspartate 71 and glutamate 141 each coordinate Mg(2+). CTP-binding positions include 148–150 (DIE), 188–193 (KTKPTQ), and lysine 224. UTP-binding positions include 188-193 (KTKPTQ) and lysine 224. A Glutamine amidotransferase type-1 domain is found at 292–534 (TISLVGKYVE…IGASVQAAEQ (243 aa)). Glycine 354 contributes to the L-glutamine binding site. Residue cysteine 381 is the Nucleophile; for glutamine hydrolysis of the active site. L-glutamine contacts are provided by residues 382–385 (LGMQ), glutamate 405, and arginine 462. Residues histidine 507 and glutamate 509 contribute to the active site.

Belongs to the CTP synthase family. In terms of assembly, homotetramer.

It catalyses the reaction UTP + L-glutamine + ATP + H2O = CTP + L-glutamate + ADP + phosphate + 2 H(+). The catalysed reaction is L-glutamine + H2O = L-glutamate + NH4(+). The enzyme catalyses UTP + NH4(+) + ATP = CTP + ADP + phosphate + 2 H(+). It functions in the pathway pyrimidine metabolism; CTP biosynthesis via de novo pathway; CTP from UDP: step 2/2. With respect to regulation, allosterically activated by GTP, when glutamine is the substrate; GTP has no effect on the reaction when ammonia is the substrate. The allosteric effector GTP functions by stabilizing the protein conformation that binds the tetrahedral intermediate(s) formed during glutamine hydrolysis. Inhibited by the product CTP, via allosteric rather than competitive inhibition. In terms of biological role, catalyzes the ATP-dependent amination of UTP to CTP with either L-glutamine or ammonia as the source of nitrogen. Regulates intracellular CTP levels through interactions with the four ribonucleotide triphosphates. The sequence is that of CTP synthase from Bacillus velezensis (strain DSM 23117 / BGSC 10A6 / LMG 26770 / FZB42) (Bacillus amyloliquefaciens subsp. plantarum).